A 350-amino-acid polypeptide reads, in one-letter code: tRNA N6-adenosine threonylcarbamoyltransferase (350 aa).

Fe cation is bound by residues His-117 and His-121. Substrate is bound by residues 140–144 (LVSGG), Asp-173, Gly-186, and Asn-277. Asp-305 lines the Fe cation pocket.

It belongs to the KAE1 / TsaD family. Requires Fe(2+) as cofactor.

Its subcellular location is the cytoplasm. It carries out the reaction L-threonylcarbamoyladenylate + adenosine(37) in tRNA = N(6)-L-threonylcarbamoyladenosine(37) in tRNA + AMP + H(+). Functionally, required for the formation of a threonylcarbamoyl group on adenosine at position 37 (t(6)A37) in tRNAs that read codons beginning with adenine. Is involved in the transfer of the threonylcarbamoyl moiety of threonylcarbamoyl-AMP (TC-AMP) to the N6 group of A37, together with TsaE and TsaB. TsaD likely plays a direct catalytic role in this reaction. This Novosphingobium aromaticivorans (strain ATCC 700278 / DSM 12444 / CCUG 56034 / CIP 105152 / NBRC 16084 / F199) protein is tRNA N6-adenosine threonylcarbamoyltransferase.